Consider the following 1033-residue polypeptide: uncharacterized protein (1033 aa).

4 coiled-coil regions span residues 212 to 326 (EIFK…KMNN), 405 to 582 (ILNN…LYKF), 615 to 771 (LEKE…LKLN), and 797 to 1019 (KMKI…NIDN).

This is an uncharacterized protein from Plasmodium falciparum (isolate 3D7).